Consider the following 876-residue polypeptide: Alanine--tRNA ligase (876 aa).

Positions 564, 568, 666, and 670 each coordinate Zn(2+).

The protein belongs to the class-II aminoacyl-tRNA synthetase family. The cofactor is Zn(2+).

The protein localises to the cytoplasm. It catalyses the reaction tRNA(Ala) + L-alanine + ATP = L-alanyl-tRNA(Ala) + AMP + diphosphate. In terms of biological role, catalyzes the attachment of alanine to tRNA(Ala) in a two-step reaction: alanine is first activated by ATP to form Ala-AMP and then transferred to the acceptor end of tRNA(Ala). Also edits incorrectly charged Ser-tRNA(Ala) and Gly-tRNA(Ala) via its editing domain. The chain is Alanine--tRNA ligase from Colwellia psychrerythraea (strain 34H / ATCC BAA-681) (Vibrio psychroerythus).